The sequence spans 152 residues: Interleukin-3 (152 aa).

The signal sequence occupies residues 1 to 19; the sequence is MSCLPVLLLLQLLVSPGLQ. N-linked (GlcNAc...) asparagine glycosylation is found at Asn34 and Asn89. Residues Cys35 and Cys103 are joined by a disulfide bond.

This sequence belongs to the IL-3 family. In terms of assembly, monomer. Activated T-cells, mast cells, natural killer cells.

Its subcellular location is the secreted. In terms of biological role, granulocyte/macrophage colony-stimulating factors are cytokines that act in hematopoiesis by controlling the production, differentiation, and function of 2 related white cell populations of the blood, the granulocytes and the monocytes-macrophages. Functionally, this CSF induces granulocytes, macrophages, mast cells, stem cells, erythroid cells, eosinophils and megakaryocytes. This chain is Interleukin-3 (IL3), found in Hylobates lar (Lar gibbon).